Here is a 407-residue protein sequence, read N- to C-terminus: 3-oxoacyl-[acyl-carrier-protein] synthase 1 (407 aa).

In terms of domain architecture, Ketosynthase family 3 (KS3) spans 1–405 (MKRVVITGLG…GTNVSLIIKK (405 aa)). Catalysis depends on for beta-ketoacyl synthase activity residues cysteine 164, histidine 299, and histidine 335.

Belongs to the thiolase-like superfamily. Beta-ketoacyl-ACP synthases family. In terms of assembly, homodimer.

The protein resides in the cytoplasm. It catalyses the reaction a fatty acyl-[ACP] + malonyl-[ACP] + H(+) = a 3-oxoacyl-[ACP] + holo-[ACP] + CO2. The catalysed reaction is (3Z)-decenoyl-[ACP] + malonyl-[ACP] + H(+) = 3-oxo-(5Z)-dodecenoyl-[ACP] + holo-[ACP] + CO2. The protein operates within lipid metabolism; fatty acid biosynthesis. Functionally, involved in the type II fatty acid elongation cycle. Catalyzes the elongation of a wide range of acyl-ACP by the addition of two carbons from malonyl-ACP to an acyl acceptor. Can also use unsaturated fatty acids. Catalyzes a key reaction in unsaturated fatty acid (UFA) synthesis, the elongation of the cis-3-decenoyl-ACP produced by FabA. The chain is 3-oxoacyl-[acyl-carrier-protein] synthase 1 (fabB) from Buchnera aphidicola subsp. Baizongia pistaciae (strain Bp).